The sequence spans 402 residues: D-galactonate dehydratase family member EGBG_02030 (402 aa).

Residue Asp-207 coordinates Mg(2+). Residue His-209 coordinates D-arabinonate. 2 residues coordinate Mg(2+): Glu-233 and Glu-259. The D-arabinonate site is built by Glu-259, Arg-280, His-309, and Glu-336.

The protein belongs to the mandelate racemase/muconate lactonizing enzyme family. GalD subfamily.

Functionally, has no detectable activity with D-mannonate and with a panel of 70 other acid sugars (in vitro), in spite of the conservation of the residues that are expected to be important for catalytic activity and cofactor binding. May have evolved a divergent function. This is D-galactonate dehydratase family member EGBG_02030 from Enterococcus gallinarum (strain EG2).